The primary structure comprises 937 residues: MRALPTTATTLLGVLFFPSASRSQYVRDLGTEQWTLSSATLNRTVPAQFPSQVHMDLLREGIIDEPYNDLNDFNLRWIADANWTYTSGKIEGLGEDYESTWLVFDGLDTFASISFCGQFVGATDNQFRQYMFDVSSILKACPEEPTLGIQFGSAPNIVDAIAQDPSSPTWPEGVQITYEYPNRWFMRKEQSDFGWDWGPAFAPAGPWKPGYVVQLKQAAPVYVRNTDLDIYRLGQINYLPPDQTQPWVVNASLDYLGSLPENPSMAIEVKDLQSGEILASRPLTNITVTEGSVTGVTVLEGVDPKLWWPQGLGDQNLYNVTISVTDGGNQSVAEVTKRTGFRTIFLNQRNITDAQLAQGIAPGANWHFEVNGHEFYAKGSNLIPPDCFWTRVTEDTMTRLFDAVVAGNQNMLRVWSSGAYLHDYIYDLADEKGILLCSEFQFSDALYPTDDAFLENVAAEVVYNVRRVNHHPSLALWAGGNEIESLMLLLVEAADPESYPFYVGEYEKMYISLFLPLVYENTRSISYSPSSTTEGYLDIDLSAPVPMAERYSNTTEGEYYGDTDHYNYDASIAFDYGTYPVGRFANEFGFHSMPSLQTWQQALTDPADLTFNSSVVMLRNHHYPAGGLMTDNYHNTVARHGRNDPGRAGLLPDAQHSVRPRGQLQRLVPRDPALPGGPLQVTNPVLPAGQRAARTPARVPVLAARGHLAGALVGGDRVRRPLEGPHYVARDIYKPVIVSPFWNYTTGALDIYVTSDLWTAAAGSVTLTWRDLSGKPIASNGGLPTKPLPFHVGALNSTRLYRMNMKQQPLPRHEDAILALELTATGSLPNTDEEVTFTHEQWFTPAFPKDLDLVNLRVRVEYDAPLGKFAVEATAGVALYTWLEHPEGVVGYFEENSFVVVPGQKKVVGFVVQADETDGEWVHDVTVRSLWDLNEGE.

Residues 1–23 form the signal peptide; sequence MRALPTTATTLLGVLFFPSASRS. Residues Asn42, Asn82, Asn250, Asn285, Asn319, Asn329, and Asn350 are each glycosylated (N-linked (GlcNAc...) asparagine). Glu482 serves as the catalytic Proton donor. 4 N-linked (GlcNAc...) asparagine glycosylation sites follow: Asn553, Asn612, Asn743, and Asn796.

This sequence belongs to the glycosyl hydrolase 2 family. Beta-mannosidase A subfamily. As to quaternary structure, homodimer. In terms of processing, N-glycosylated.

The protein localises to the secreted. The enzyme catalyses Hydrolysis of terminal, non-reducing beta-D-mannose residues in beta-D-mannosides.. It participates in glycan metabolism; N-glycan degradation. Functionally, exoglycosidase that cleaves the single beta-linked mannose residue from the non-reducing end of beta-mannosidic oligosaccharides of various complexity and length. Involved in the degradation of polymeric mannan and galactomannan. Releases the terminal mannose residue from mannotriose and is somewaht less active on other mannooligosaccharides. The sequence is that of Beta-mannosidase A (mndA) from Aspergillus aculeatus.